Reading from the N-terminus, the 504-residue chain is Protein DETOXIFICATION 38 (504 aa).

12 helical membrane passes run 56-76 (LLLRLALPAILVYLINGGMGI), 90-110 (LAAASIGNSSFSLVYALMLGM), 139-159 (IVLALVGFPMTILYTFSYPIL), 170-190 (YMGSLYIAGLIPQIFAYAVYF), 208-228 (ISAAALVLQISLTWITVYAMG), 234-254 (IAYVLTISWWFIVGAQTFYVI), 273-295 (GLWSFFKLSAGSAVMICLELWYT), 316-336 (SICMSISALSFMVSVGFNAAV), 356-376 (TWTATFVSFVISVVEALVVIA), 401-421 (FLAVTIILNGIQPVLSGVAVG), 433-453 (IGCYYIVGIPIGCILGFTFNF), and 457-477 (GIWTGMIGGTLMQTLILLYVT).

Belongs to the multi antimicrobial extrusion (MATE) (TC 2.A.66.1) family.

The protein resides in the membrane. This Arabidopsis thaliana (Mouse-ear cress) protein is Protein DETOXIFICATION 38.